The chain runs to 374 residues: Lipoyl synthase, mitochondrial (374 aa).

The N-terminal 19 residues, 1 to 19, are a transit peptide targeting the mitochondrion; it reads MHSRSALLYRFLRPASRCF. Residues C103, C108, C114, C134, C138, C141, and S350 each contribute to the [4Fe-4S] cluster site. Residues 119–339 enclose the Radical SAM core domain; the sequence is ETGTATATIM…RLLGMEMGFR (221 aa).

It belongs to the radical SAM superfamily. Lipoyl synthase family. Requires [4Fe-4S] cluster as cofactor. In terms of tissue distribution, expressed in leaves and flowers, but not in roots. Expressed in roots, rosette leaves, cauline leaves, stems, flowers and siliques.

The protein resides in the mitochondrion. It catalyses the reaction [[Fe-S] cluster scaffold protein carrying a second [4Fe-4S](2+) cluster] + N(6)-octanoyl-L-lysyl-[protein] + 2 oxidized [2Fe-2S]-[ferredoxin] + 2 S-adenosyl-L-methionine + 4 H(+) = [[Fe-S] cluster scaffold protein] + N(6)-[(R)-dihydrolipoyl]-L-lysyl-[protein] + 4 Fe(3+) + 2 hydrogen sulfide + 2 5'-deoxyadenosine + 2 L-methionine + 2 reduced [2Fe-2S]-[ferredoxin]. The protein operates within protein modification; protein lipoylation via endogenous pathway; protein N(6)-(lipoyl)lysine from octanoyl-[acyl-carrier-protein]: step 2/2. In terms of biological role, catalyzes the radical-mediated insertion of two sulfur atoms into the C-6 and C-8 positions of the octanoyl moiety bound to the lipoyl domains of lipoate-dependent enzymes, thereby converting the octanoylated domains into lipoylated derivatives. Together with LIP2 is essential for mitochondrial protein lipoylation during seed development. Required for the lipoylation of mitochondrial pyruvate dehydrogenase component E2 proteins in leaves and roots. This Arabidopsis thaliana (Mouse-ear cress) protein is Lipoyl synthase, mitochondrial.